The chain runs to 969 residues: Integrator complex subunit 4 (969 aa).

8 HEAT repeats span residues 68-107 (AESV…TAGF), 147-185 (VSHR…VEAS), 192-230 (NAVA…RGLK), 231-265 (LQQA…SQLY), 279-315 (IRLV…LQVS), 371-407 (NLID…ARSS), 408-446 (APFA…NITL), and 448-486 (EDQL…CIQL). Residues 928–949 (RASNSTWGESTETVPSTESSTE) show a composition bias toward low complexity. The segment at 928 to 950 (RASNSTWGESTETVPSTESSTEG) is disordered.

The protein belongs to the Integrator subunit 4 family. In terms of assembly, component of the Integrator complex, composed of core subunits INTS1, INTS2, INTS3, INTS4, INTS5, INTS6, INTS7, INTS8, INTS9/RC74, INTS10, INTS11/CPSF3L, INTS12, INTS13, INTS14 and INTS15. The core complex associates with protein phosphatase 2A subunits PPP2CA and PPP2R1A, to form the Integrator-PP2A (INTAC) complex. INTS4 is part of the RNA endonuclease subcomplex, composed of INTS4, INTS9, INTS11 and inositol hexakisphosphate (InsP6).

It localises to the nucleus. The protein resides in the cytoplasm. Component of the integrator complex, a multiprotein complex that terminates RNA polymerase II (Pol II) transcription in the promoter-proximal region of genes. The integrator complex provides a quality checkpoint during transcription elongation by driving premature transcription termination of transcripts that are unfavorably configured for transcriptional elongation: the complex terminates transcription by (1) catalyzing dephosphorylation of the C-terminal domain (CTD) of Pol II subunit POLR2A/RPB1 and SUPT5H/SPT5, (2) degrading the exiting nascent RNA transcript via endonuclease activity and (3) promoting the release of Pol II from bound DNA. The integrator complex is also involved in terminating the synthesis of non-coding Pol II transcripts, such as enhancer RNAs (eRNAs), small nuclear RNAs (snRNAs), telomerase RNAs and long non-coding RNAs (lncRNAs). This Xenopus laevis (African clawed frog) protein is Integrator complex subunit 4 (ints4).